The sequence spans 189 residues: 6,7-dimethyl-8-ribityllumazine synthase (189 aa).

Residues Trp31, 65–67 (SFE), and 89–91 (CVI) each bind 5-amino-6-(D-ribitylamino)uracil. 94-95 (ET) serves as a coordination point for (2S)-2-hydroxy-3-oxobutyl phosphate. His97 serves as the catalytic Proton donor. Phe122 is a binding site for 5-amino-6-(D-ribitylamino)uracil. Residue Arg136 coordinates (2S)-2-hydroxy-3-oxobutyl phosphate.

The protein belongs to the DMRL synthase family.

The catalysed reaction is (2S)-2-hydroxy-3-oxobutyl phosphate + 5-amino-6-(D-ribitylamino)uracil = 6,7-dimethyl-8-(1-D-ribityl)lumazine + phosphate + 2 H2O + H(+). The protein operates within cofactor biosynthesis; riboflavin biosynthesis; riboflavin from 2-hydroxy-3-oxobutyl phosphate and 5-amino-6-(D-ribitylamino)uracil: step 1/2. In terms of biological role, catalyzes the formation of 6,7-dimethyl-8-ribityllumazine by condensation of 5-amino-6-(D-ribitylamino)uracil with 3,4-dihydroxy-2-butanone 4-phosphate. This is the penultimate step in the biosynthesis of riboflavin. This chain is 6,7-dimethyl-8-ribityllumazine synthase, found in Flavobacterium psychrophilum (strain ATCC 49511 / DSM 21280 / CIP 103535 / JIP02/86).